Here is a 304-residue protein sequence, read N- to C-terminus: Protease HtpX homolog 1 (304 aa).

2 helical membrane passes run 17–37 (VTLF…IALL) and 39–59 (SWVL…WFSD). Histidine 140 contacts Zn(2+). Residue glutamate 141 is part of the active site. Zn(2+) is bound at residue histidine 144. The next 2 membrane-spanning stretches (helical) occupy residues 151–171 (AVIT…RFAF) and 186–206 (AVLA…FLLI). Position 214 (glutamate 214) interacts with Zn(2+).

It belongs to the peptidase M48B family. It depends on Zn(2+) as a cofactor.

The protein resides in the cell membrane. The protein is Protease HtpX homolog 1 of Streptomyces coelicolor (strain ATCC BAA-471 / A3(2) / M145).